Consider the following 217-residue polypeptide: N-(5'-phosphoribosyl)anthranilate isomerase (217 aa).

It belongs to the TrpF family.

The enzyme catalyses N-(5-phospho-beta-D-ribosyl)anthranilate = 1-(2-carboxyphenylamino)-1-deoxy-D-ribulose 5-phosphate. It functions in the pathway amino-acid biosynthesis; L-tryptophan biosynthesis; L-tryptophan from chorismate: step 3/5. The protein is N-(5'-phosphoribosyl)anthranilate isomerase of Acaryochloris marina (strain MBIC 11017).